We begin with the raw amino-acid sequence, 430 residues long: Putative chloroquine resistance transporter (430 aa).

The tract at residues M1–D22 is disordered. Residues M1–S53 are Cytoplasmic-facing. Residues S7–S21 show a composition bias toward low complexity. Residues K54–F74 form a helical membrane-spanning segment. The Vacuolar segment spans residues K75–T88. A helical membrane pass occupies residues I89–L109. Topologically, residues F110–R122 are cytoplasmic. Residues P123–A143 traverse the membrane as a helical segment. Residues H144–G147 are Vacuolar-facing. A helical transmembrane segment spans residues L148 to I168. At L169 to Y173 the chain is on the cytoplasmic side. Residues H174–L194 form a helical membrane-spanning segment. The N-linked (GlcNAc...) asparagine glycan is linked to N195. Residues N195 to N206 are Vacuolar-facing. A helical transmembrane segment spans residues N207–L223. The Cytoplasmic portion of the chain corresponds to R224–Q239. Residues F240–P260 form a helical membrane-spanning segment. Topologically, residues F261 to E306 are vacuolar. 2 cysteine pairs are disulfide-bonded: C281–C304 and C293–C301. A helical transmembrane segment spans residues A307 to M329. The Cytoplasmic portion of the chain corresponds to L330–T335. The chain crosses the membrane as a helical span at residues F336–A358. The Vacuolar segment spans residues G359 to S364. The chain crosses the membrane as a helical span at residues F365–L385. Residues G386 to T430 are Cytoplasmic-facing.

Belongs to the CRT-like transporter family.

It is found in the vacuole membrane. Nutrient transporter. Involved in maintaining the osmotic homeostasis of the digestive vacuole. This Theileria annulata protein is Putative chloroquine resistance transporter.